Consider the following 31-residue polypeptide: Large ribosomal subunit protein bL21 (31 aa).

Belongs to the bacterial ribosomal protein bL21 family. As to quaternary structure, part of the 50S ribosomal subunit. Contacts protein L20.

Functionally, this protein binds to 23S rRNA in the presence of protein L20. The polypeptide is Large ribosomal subunit protein bL21 (rplU) (Streptococcus thermophilus).